Consider the following 305-residue polypeptide: Tyrosine recombinase XerD (305 aa).

Residues 3-88 enclose the Core-binding (CB) domain; the sequence is PADASVIERF…TLRAFYGLCL (86 aa). The 191-residue stretch at 109–299 folds into the Tyr recombinase domain; sequence SLPKALTESQ…ARQHLQKLHA (191 aa). Catalysis depends on residues Arg149, Lys173, His251, Arg254, and His277. The active-site O-(3'-phospho-DNA)-tyrosine intermediate is Tyr286.

This sequence belongs to the 'phage' integrase family. XerD subfamily. Forms a cyclic heterotetrameric complex composed of two molecules of XerC and two molecules of XerD.

The protein localises to the cytoplasm. Its function is as follows. Site-specific tyrosine recombinase, which acts by catalyzing the cutting and rejoining of the recombining DNA molecules. The XerC-XerD complex is essential to convert dimers of the bacterial chromosome into monomers to permit their segregation at cell division. It also contributes to the segregational stability of plasmids. The chain is Tyrosine recombinase XerD from Xanthomonas axonopodis pv. citri (strain 306).